The following is a 204-amino-acid chain: Large ribosomal subunit protein uL13 (204 aa).

This sequence belongs to the universal ribosomal protein uL13 family.

The chain is Large ribosomal subunit protein uL13 (RpL13A) from Choristoneura parallela (Spotted fireworm moth).